We begin with the raw amino-acid sequence, 244 residues long: DNA repair protein RecO (244 aa).

Belongs to the RecO family.

Involved in DNA repair and RecF pathway recombination. This Jannaschia sp. (strain CCS1) protein is DNA repair protein RecO.